The primary structure comprises 66 residues: Large ribosomal subunit protein bL35 (66 aa).

This sequence belongs to the bacterial ribosomal protein bL35 family.

The sequence is that of Large ribosomal subunit protein bL35 from Beijerinckia indica subsp. indica (strain ATCC 9039 / DSM 1715 / NCIMB 8712).